We begin with the raw amino-acid sequence, 188 residues long: Mitochondrial import inner membrane translocase subunit Tim23B (188 aa).

2 helical membrane-spanning segments follow: residues 73 to 93 (FELAFFTIGGCCMTGAAFGAM) and 125 to 145 (ALWANTLGSLALLYSAFGVII).

Belongs to the Tim17/Tim22/Tim23 family.

It is found in the mitochondrion inner membrane. Functionally, may participate in the translocation of transit peptide-containing proteins across the mitochondrial inner membrane. the PAM complex. In Homo sapiens (Human), this protein is Mitochondrial import inner membrane translocase subunit Tim23B.